Reading from the N-terminus, the 89-residue chain is Small ribosomal subunit protein uS17 (89 aa).

The protein belongs to the universal ribosomal protein uS17 family. Part of the 30S ribosomal subunit.

In terms of biological role, one of the primary rRNA binding proteins, it binds specifically to the 5'-end of 16S ribosomal RNA. The polypeptide is Small ribosomal subunit protein uS17 (Coxiella burnetii (strain RSA 331 / Henzerling II)).